A 545-amino-acid chain; its full sequence is MELLLPHASNSCPLTVLGFLERAASVFGDSPSLLHTTTVHTWSETHSRCLRIASTLSSASLGINRGQVVSVIGPNVPSVYELQFAVPMSGAVLNNINPRLDAHALSVLLRHSESKLVFVDHHSSSLVLEAVSFLPKDERPRLVILNDGNDMPSSSSADMDFLDTYEGFMERGDLRFKWVRPKSEWTPMVLNYTSGTTSSPKGVVHSHRSVFMSTINSLLDWSLPNRPVYLWTLPMFHANGWSYTWATAAVGARNICVTRVDVPTIFNLIDKYQVTHMCAAPMVLNMLTNHPAQKPLQSPVKVMTAGAPPPATVISKAEALGFDVSHGYGMTETGGLVVSCALKPEWDRLEPDERAKQKSRQGIRTAVFAEVDVRDPISGKSVKHDGATVGEIVFRGGSVMLGYYKDPEGTAASMREDGWFYTGDIGVMHPDGYLEVKDRSKDVVICGGENISSTELEAVLYTNPAIKEAAVVAKPDKMWGETPCAFVSLKYHDGSVTEREIREFCKTKLPKYMVPRNVVFLEELPKTSTGKIQKFLLRQMAKSLP.

The protein belongs to the ATP-dependent AMP-binding enzyme family. In terms of tissue distribution, expressed in roots, leaves, stems, flowers and developing seeds.

May act as an acid--thiol ligase that activates carboxylic acids by forming acyl-CoAs. The protein is Probable acyl-activating enzyme 4 (AEE4) of Arabidopsis thaliana (Mouse-ear cress).